Reading from the N-terminus, the 150-residue chain is Ribosomal RNA large subunit methyltransferase H (150 aa).

Residues Ala100 and 118 to 123 contribute to the S-adenosyl-L-methionine site; that span reads LSEMTF.

This sequence belongs to the RNA methyltransferase RlmH family. In terms of assembly, homodimer.

It is found in the cytoplasm. It carries out the reaction pseudouridine(1915) in 23S rRNA + S-adenosyl-L-methionine = N(3)-methylpseudouridine(1915) in 23S rRNA + S-adenosyl-L-homocysteine + H(+). Functionally, specifically methylates the pseudouridine at position 1915 (m3Psi1915) in 23S rRNA. The protein is Ribosomal RNA large subunit methyltransferase H of Helicobacter pylori (strain P12).